We begin with the raw amino-acid sequence, 362 residues long: MNKSRVVVGMSGGVDSSVAALLLKQQGYDVTGLFMKNWEEDDTDEYCSSRQDFLDAASVADILDIPLEVVNFSTEYRERVFNLFLKEYQAGRTPNPDVLCNSEIKFRAFLDHALNLGADWIATGHYAQVHETDGLFQLLKGEDGNKDQSYFLYRLNQQQLSHTIFPIGHLYKREVRKIAREHRLPNSTKKDSTGICFIGERPFREFLNRYLPANPGEIHTLDDQVVGEHLGVMYYTIGQRQGLGIGGTRQGSEQPWFVSGKDIKKNVLYVVQGHDHPALLRSSLTAADLSWISGTPPHQNWVYAAKIRYRQTDAPCAITHFEHDSCQIGFAAPQWGITPGQSVVVYESKVCLGGGVIIGSND.

ATP contacts are provided by residues 9–16 (GMSGGVDS) and M35. The segment at 95–97 (NPD) is interaction with target base in tRNA. Catalysis depends on C100, which acts as the Nucleophile. C100 and C196 form a disulfide bridge. An ATP-binding site is contributed by G124. The interaction with tRNA stretch occupies residues 146–148 (KDQ). C196 (cysteine persulfide intermediate) is an active-site residue. An interaction with tRNA region spans residues 308–309 (RY).

It belongs to the MnmA/TRMU family.

The protein resides in the cytoplasm. The catalysed reaction is S-sulfanyl-L-cysteinyl-[protein] + uridine(34) in tRNA + AH2 + ATP = 2-thiouridine(34) in tRNA + L-cysteinyl-[protein] + A + AMP + diphosphate + H(+). Its function is as follows. Catalyzes the 2-thiolation of uridine at the wobble position (U34) of tRNA, leading to the formation of s(2)U34. This chain is tRNA-specific 2-thiouridylase MnmA, found in Nitrosomonas europaea (strain ATCC 19718 / CIP 103999 / KCTC 2705 / NBRC 14298).